A 282-amino-acid polypeptide reads, in one-letter code: NADPH-dependent 7-cyano-7-deazaguanine reductase (282 aa).

Substrate is bound at residue 88 to 90 (IES). NADPH is bound at residue 90-91 (SK). C190 (thioimide intermediate) is an active-site residue. D197 functions as the Proton donor in the catalytic mechanism. 229-230 (HE) contributes to the substrate binding site. 258 to 259 (RG) is an NADPH binding site.

Belongs to the GTP cyclohydrolase I family. QueF type 2 subfamily. As to quaternary structure, homodimer.

It localises to the cytoplasm. It catalyses the reaction 7-aminomethyl-7-carbaguanine + 2 NADP(+) = 7-cyano-7-deazaguanine + 2 NADPH + 3 H(+). It participates in tRNA modification; tRNA-queuosine biosynthesis. Catalyzes the NADPH-dependent reduction of 7-cyano-7-deazaguanine (preQ0) to 7-aminomethyl-7-deazaguanine (preQ1). This Shigella dysenteriae serotype 1 (strain Sd197) protein is NADPH-dependent 7-cyano-7-deazaguanine reductase.